The following is a 133-amino-acid chain: Ribosome-binding factor A (133 aa).

Belongs to the RbfA family. Monomer. Binds 30S ribosomal subunits, but not 50S ribosomal subunits or 70S ribosomes.

The protein localises to the cytoplasm. Its function is as follows. One of several proteins that assist in the late maturation steps of the functional core of the 30S ribosomal subunit. Associates with free 30S ribosomal subunits (but not with 30S subunits that are part of 70S ribosomes or polysomes). Required for efficient processing of 16S rRNA. May interact with the 5'-terminal helix region of 16S rRNA. The sequence is that of Ribosome-binding factor A from Bordetella bronchiseptica (strain ATCC BAA-588 / NCTC 13252 / RB50) (Alcaligenes bronchisepticus).